The chain runs to 207 residues: dTTP/UTP pyrophosphatase (207 aa).

Residue Asp86 is the Proton acceptor of the active site.

Belongs to the Maf family. YhdE subfamily. A divalent metal cation is required as a cofactor.

The protein resides in the cytoplasm. It catalyses the reaction dTTP + H2O = dTMP + diphosphate + H(+). The enzyme catalyses UTP + H2O = UMP + diphosphate + H(+). Functionally, nucleoside triphosphate pyrophosphatase that hydrolyzes dTTP and UTP. May have a dual role in cell division arrest and in preventing the incorporation of modified nucleotides into cellular nucleic acids. This Nitrosospira multiformis (strain ATCC 25196 / NCIMB 11849 / C 71) protein is dTTP/UTP pyrophosphatase.